A 132-amino-acid polypeptide reads, in one-letter code: Small ribosomal subunit protein uS8 (132 aa).

This sequence belongs to the universal ribosomal protein uS8 family. As to quaternary structure, part of the 30S ribosomal subunit. Contacts proteins S5 and S12.

In terms of biological role, one of the primary rRNA binding proteins, it binds directly to 16S rRNA central domain where it helps coordinate assembly of the platform of the 30S subunit. This is Small ribosomal subunit protein uS8 from Caulobacter sp. (strain K31).